Consider the following 417-residue polypeptide: N-acetylmuramoyl-L-alanine amidase AmiC (417 aa).

The segment at residues Met-1–Ala-31 is a signal peptide (tat-type signal). The tract at residues Leu-166–Asp-185 is disordered. The MurNAc-LAA domain maps to Ile-190–Lys-404.

This sequence belongs to the N-acetylmuramoyl-L-alanine amidase 3 family. Post-translationally, predicted to be exported by the Tat system. The position of the signal peptide cleavage has not been experimentally proven.

The protein resides in the periplasm. It catalyses the reaction Hydrolyzes the link between N-acetylmuramoyl residues and L-amino acid residues in certain cell-wall glycopeptides.. Cell-wall hydrolase involved in septum cleavage during cell division. The sequence is that of N-acetylmuramoyl-L-alanine amidase AmiC (amiC) from Escherichia coli O6:H1 (strain CFT073 / ATCC 700928 / UPEC).